Consider the following 129-residue polypeptide: MSWQTILAIGSGGFIGAVLRAYFNGIISHKMPHDIPFGTLGVNLVGSFIMGILIAYFMYSTIFSLHVKSFLSTGVLGALTTYSTFAIESFLLLNSGHIALALANISLNAFGSILMAGGGFYIIKLSLRA.

4 helical membrane-spanning segments follow: residues 6-26 (ILAI…FNGI), 35-55 (IPFG…ILIA), 73-93 (TGVL…FLLL), and 98-118 (IALA…MAGG). Residues G77 and T80 each contribute to the Na(+) site.

The protein belongs to the fluoride channel Fluc/FEX (TC 1.A.43) family.

It is found in the cell inner membrane. The catalysed reaction is fluoride(in) = fluoride(out). Na(+) is not transported, but it plays an essential structural role and its presence is essential for fluoride channel function. Fluoride-specific ion channel. Important for reducing fluoride concentration in the cell, thus reducing its toxicity. The sequence is that of Fluoride-specific ion channel FluC from Sulfurimonas denitrificans (strain ATCC 33889 / DSM 1251) (Thiomicrospira denitrificans (strain ATCC 33889 / DSM 1251)).